A 55-amino-acid polypeptide reads, in one-letter code: Large ribosomal subunit protein uL15 (55 aa).

It belongs to the universal ribosomal protein uL15 family. In terms of assembly, part of the 50S ribosomal subunit.

Its function is as follows. Binds to the 23S rRNA. This Lactococcus lactis subsp. cremoris (Streptococcus cremoris) protein is Large ribosomal subunit protein uL15 (rplO).